Reading from the N-terminus, the 807-residue chain is 1-phosphatidylinositol 4,5-bisphosphate phosphodiesterase delta-4 (807 aa).

Positions 16-124 (LLMQEGTMMR…WMRGLQLLVD (109 aa)) constitute a PH domain. The segment at 26–53 (KVRTKSWKKLRYFRLQNDGMTVWHGSQP) is substrate binding. EF-hand domains are found at residues 134–169 (QMDQ…MNVE), 170–205 (MDEE…LTKR), and 203–237 (TKRT…EQKE). Residues aspartate 147, asparagine 149, aspartate 151, arginine 153, glutamate 158, aspartate 183, serine 187, aspartate 189, and glutamate 194 each coordinate Ca(2+). Residues 213–243 (EDFSSDKQKLTLLEFVDFLRKEQKEKDHAPD) carry the GBA motif. Residues 290–435 (QDMTQPLSHY…LRGKILVKGK (146 aa)) form the PI-PLC X-box domain. Histidine 305 is a catalytic residue. Asparagine 306, glutamate 335, and aspartate 337 together coordinate Ca(2+). Residue histidine 350 is part of the active site. Glutamate 384 is a binding site for Ca(2+). Substrate-binding residues include lysine 433 and lysine 435. A disordered region spans residues 442–490 (VDKEEEEEEEEEELEKDEGPDLDPASPELDTQPQPETQGQAAGNKKERK). The span at 443 to 462 (DKEEEEEEEEEELEKDEGPD) shows a compositional bias: acidic residues. Over residues 470-482 (LDTQPQPETQGQA) the composition is skewed to polar residues. In terms of domain architecture, PI-PLC Y-box spans 538–654 (LSALVVYLRT…GYVLKPEFLR (117 aa)). 2 residues coordinate substrate: serine 567 and arginine 594. One can recognise a C2 domain in the interval 654-781 (RDTQSSFNPE…QGYRHVSLLS (128 aa)). Residues aspartate 697, asparagine 721, aspartate 750, and tyrosine 751 each coordinate Ca(2+). Positions 776 to 779 (HVSL) match the PDZ-binding motif.

As to quaternary structure, interacts with GRIP1. Interacts (via GBA motif) with guanine nucleotide-binding protein G(i) alpha subunit GNAI3 (inactive GDP-bound form)l low-affinity interaction. Ca(2+) serves as cofactor.

It is found in the membrane. The protein localises to the nucleus. The protein resides in the cytoplasm. Its subcellular location is the endoplasmic reticulum. The catalysed reaction is a 1,2-diacyl-sn-glycero-3-phospho-(1D-myo-inositol-4,5-bisphosphate) + H2O = 1D-myo-inositol 1,4,5-trisphosphate + a 1,2-diacyl-sn-glycerol + H(+). It catalyses the reaction a 1,2-diacyl-sn-glycero-3-phospho-(1D-myo-inositol) + H2O = 1D-myo-inositol 1-phosphate + a 1,2-diacyl-sn-glycerol + H(+). Its function is as follows. Hydrolyzes the phosphatidylinositol 4,5-bisphosphate (PIP2) to generate 2 second messenger molecules diacylglycerol (DAG) and inositol 1,4,5-trisphosphate (IP3). DAG mediates the activation of protein kinase C (PKC), while IP3 releases Ca(2+) from intracellular stores. Required for acrosome reaction in sperm during fertilization, probably by acting as an important enzyme for intracellular Ca(2+) mobilization in the zona pellucida-induced acrosome reaction. May play a role in cell growth. Modulates the liver regeneration in cooperation with nuclear PKC. Overexpression up-regulates the Erk signaling pathway and proliferation. In Mus musculus (Mouse), this protein is 1-phosphatidylinositol 4,5-bisphosphate phosphodiesterase delta-4.